We begin with the raw amino-acid sequence, 987 residues long: ATP-dependent 6-phosphofructokinase subunit alpha (987 aa).

The tract at residues 1–602 (MPSSSDAINR…DYRYFRDISI (602 aa)) is N-terminal catalytic PFK domain 1. ATP contacts are provided by residues glycine 237, 300–301 (RC), and 330–333 (GDGS). Aspartate 331 is a binding site for Mg(2+). Beta-D-fructose 6-phosphate is bound by residues 376–378 (SID), arginine 413, 420–422 (MGR), glutamate 477, arginine 504, and 510–513 (HVQR). The active-site Proton acceptor is the aspartate 378. The segment at 603-616 (YDDGSKQLSEDKRL) is interdomain linker. Residues 617–987 (NIAIVHVGAA…KSLLKKQERY (371 aa)) form a C-terminal regulatory PFK domain 2 region. Beta-D-fructose 2,6-bisphosphate is bound by residues arginine 686, 743-747 (TVSNN), arginine 781, 788-790 (QGG), glutamate 848, arginine 874, 880-883 (HVQQ), and arginine 958.

Belongs to the phosphofructokinase type A (PFKA) family. ATP-dependent PFK group I subfamily. Eukaryotic two domain clade 'E' sub-subfamily. As to quaternary structure, heterooctamer of 4 alpha and 4 beta chains. Requires Mg(2+) as cofactor.

It is found in the cytoplasm. The catalysed reaction is beta-D-fructose 6-phosphate + ATP = beta-D-fructose 1,6-bisphosphate + ADP + H(+). It participates in carbohydrate degradation; glycolysis; D-glyceraldehyde 3-phosphate and glycerone phosphate from D-glucose: step 3/4. With respect to regulation, allosterically activated by ADP, AMP, or fructose 2,6-bisphosphate, and allosterically inhibited by ATP or citrate. In terms of biological role, catalyzes the phosphorylation of D-fructose 6-phosphate to fructose 1,6-bisphosphate by ATP, the first committing step of glycolysis. The sequence is that of ATP-dependent 6-phosphofructokinase subunit alpha (PFK1) from Candida albicans (Yeast).